Here is a 388-residue protein sequence, read N- to C-terminus: MNLHEYQAKQLFARYGLPAPVGYACTTPREAEEAASKIGAGPWVVKCQVHAGGRGKAGGVKVVNSKEDIRAFAENWLGKRLVTYQTDANGQPVNQILVEAATDIAKELYLGAVVDRSSRRVVFMASTEGGVEIEKVAEETPHLIHKVALDPLTGPMPYQGRELAFKLGLEGKLVQQFTKIFMGLATIFLERDLALIEINPLVITKQGDLICLDGKLGADGNALFRQPDLREMRDQSQEDPREAQAAQWELNYVALDGNIGCMVNGAGLAMGTMDIVKLHGGEPANFLDVGGGATKERVTEAFKIILSDDKVKAVLVNIFGGIVRCDLIADGIIGAVAEVGVNVPVVVRLEGNNAELGAKKLADSGLNIIAAKGLTDAAQQVVAAVEGK.

The region spanning 9-244 (KQLFARYGLP…QSQEDPREAQ (236 aa)) is the ATP-grasp domain. ATP is bound by residues K46, 53–55 (GRG), E99, T102, and E107. Mg(2+) contacts are provided by N199 and D213. Residues N264 and 321–323 (GIV) each bind substrate.

This sequence belongs to the succinate/malate CoA ligase beta subunit family. Heterotetramer of two alpha and two beta subunits. It depends on Mg(2+) as a cofactor.

It carries out the reaction succinate + ATP + CoA = succinyl-CoA + ADP + phosphate. It catalyses the reaction GTP + succinate + CoA = succinyl-CoA + GDP + phosphate. Its pathway is carbohydrate metabolism; tricarboxylic acid cycle; succinate from succinyl-CoA (ligase route): step 1/1. Functionally, succinyl-CoA synthetase functions in the citric acid cycle (TCA), coupling the hydrolysis of succinyl-CoA to the synthesis of either ATP or GTP and thus represents the only step of substrate-level phosphorylation in the TCA. The beta subunit provides nucleotide specificity of the enzyme and binds the substrate succinate, while the binding sites for coenzyme A and phosphate are found in the alpha subunit. The protein is Succinate--CoA ligase [ADP-forming] subunit beta of Escherichia coli O139:H28 (strain E24377A / ETEC).